Consider the following 411-residue polypeptide: Dual-specificity RNA methyltransferase RlmN (411 aa).

The Proton acceptor role is filled by glutamate 124. Residues 130-379 (EEGRGTLCIS…IRTPRGRDIL (250 aa)) enclose the Radical SAM core domain. An intrachain disulfide couples cysteine 137 to cysteine 382. Cysteine 144, cysteine 148, and cysteine 151 together coordinate [4Fe-4S] cluster. S-adenosyl-L-methionine-binding positions include 208–209 (GE), serine 240, 262–264 (SLH), and asparagine 339. Residue cysteine 382 is the S-methylcysteine intermediate of the active site.

It belongs to the radical SAM superfamily. RlmN family. [4Fe-4S] cluster is required as a cofactor.

It is found in the cytoplasm. The enzyme catalyses adenosine(2503) in 23S rRNA + 2 reduced [2Fe-2S]-[ferredoxin] + 2 S-adenosyl-L-methionine = 2-methyladenosine(2503) in 23S rRNA + 5'-deoxyadenosine + L-methionine + 2 oxidized [2Fe-2S]-[ferredoxin] + S-adenosyl-L-homocysteine. It catalyses the reaction adenosine(37) in tRNA + 2 reduced [2Fe-2S]-[ferredoxin] + 2 S-adenosyl-L-methionine = 2-methyladenosine(37) in tRNA + 5'-deoxyadenosine + L-methionine + 2 oxidized [2Fe-2S]-[ferredoxin] + S-adenosyl-L-homocysteine. Functionally, specifically methylates position 2 of adenine 2503 in 23S rRNA and position 2 of adenine 37 in tRNAs. m2A2503 modification seems to play a crucial role in the proofreading step occurring at the peptidyl transferase center and thus would serve to optimize ribosomal fidelity. In Rhizobium meliloti (strain 1021) (Ensifer meliloti), this protein is Dual-specificity RNA methyltransferase RlmN.